We begin with the raw amino-acid sequence, 145 residues long: Putative pre-16S rRNA nuclease (145 aa).

The protein belongs to the YqgF nuclease family.

It is found in the cytoplasm. In terms of biological role, could be a nuclease involved in processing of the 5'-end of pre-16S rRNA. In Prochlorococcus marinus (strain MIT 9211), this protein is Putative pre-16S rRNA nuclease.